The chain runs to 138 residues: Large ribosomal subunit protein uL16 (138 aa).

A compositionally biased stretch (basic residues) spans Met-1–Gly-19. Positions Met-1–Lys-22 are disordered.

Belongs to the universal ribosomal protein uL16 family. Part of the 50S ribosomal subunit.

In terms of biological role, binds 23S rRNA and is also seen to make contacts with the A and possibly P site tRNAs. This Parafrankia sp. (strain EAN1pec) protein is Large ribosomal subunit protein uL16.